Consider the following 891-residue polypeptide: Receptor-like protein 50 (891 aa).

The first 22 residues, 1–22, serve as a signal peptide directing secretion; the sequence is MITIIWSLCLIFCLSNSILVIA. Residues 23 to 849 lie on the Extracellular side of the membrane; sequence KDLCLPDQRD…KEEKDKGLSW (827 aa). Residues Asn-62 and Asn-98 are each glycosylated (N-linked (GlcNAc...) asparagine). 7 LRR repeats span residues 105–130, 132–152, 153–176, 177–201, 203–225, 226–249, and 250–272; these read QHLQ…NFKY, RVLN…LRSL, SYLT…SMGN, LKHL…LGNL, YLTD…MGNL, KSLR…LGSL, and SNLT…SMSS. Asn-200 carries N-linked (GlcNAc...) asparagine glycosylation. Asn-251, Asn-285, and Asn-306 each carry an N-linked (GlcNAc...) asparagine glycan. LRR repeat units lie at residues 286 to 309, 310 to 334, 336 to 358, and 359 to 383; these read LSSL…NMSS, LSKL…LFML, SLIK…NISS, and PSNL…ILKL. The N-linked (GlcNAc...) asparagine glycan is linked to Asn-355. Residues 384–407 form an LRR 12; degenerate repeat; it reads VGLSALSLSFWDTGGIVDFSIFLQ. LRR repeat units follow at residues 408–436, 438–453, 454–477, 478–504, 506–519, 520–544, 545–568, 570–591, 593–614, 615–641, 642–665, 712–736, 737–760, 761–784, and 786–809; these read LKSL…MMHL, LSSC…LENQ, TSLY…LWRL, PTLR…IYSF, ASDN…PRAV, CEIG…EISN, KTLS…SLHG, LRSL…LINC, YLQF…WLKS, LPNL…SLSF, SKLR…YFVG, FEIY…IGIL, KELI…LSNL, SNLQ…LGEL, and FLAR…QIQS. N-linked (GlcNAc...) asparagine glycans are attached at residues Asn-422, Asn-442, and Asn-452. N-linked (GlcNAc...) asparagine glycosylation is found at Asn-531, Asn-544, Asn-554, Asn-590, and Asn-605. Residues Asn-743 and Asn-759 are each glycosylated (N-linked (GlcNAc...) asparagine). Residues Asn-791 and Asn-811 are each glycosylated (N-linked (GlcNAc...) asparagine). Residues 850–870 traverse the membrane as a helical segment; the sequence is VAAAIGYVPGLFCGLAIGHIL. The Cytoplasmic segment spans residues 871 to 891; sequence TSYKRDWFMRIFSCFSSPLKK.

It belongs to the RLP family.

It is found in the cell membrane. In Arabidopsis thaliana (Mouse-ear cress), this protein is Receptor-like protein 50.